A 167-amino-acid polypeptide reads, in one-letter code: NADH-quinone oxidoreductase subunit B (167 aa).

Residues cysteine 40, cysteine 41, cysteine 105, and cysteine 134 each contribute to the [4Fe-4S] cluster site.

The protein belongs to the complex I 20 kDa subunit family. NDH-1 is composed of 14 different subunits. Subunits NuoB, C, D, E, F, and G constitute the peripheral sector of the complex. Requires [4Fe-4S] cluster as cofactor.

The protein resides in the cell inner membrane. The catalysed reaction is a quinone + NADH + 5 H(+)(in) = a quinol + NAD(+) + 4 H(+)(out). NDH-1 shuttles electrons from NADH, via FMN and iron-sulfur (Fe-S) centers, to quinones in the respiratory chain. The immediate electron acceptor for the enzyme in this species is believed to be ubiquinone. Couples the redox reaction to proton translocation (for every two electrons transferred, four hydrogen ions are translocated across the cytoplasmic membrane), and thus conserves the redox energy in a proton gradient. This chain is NADH-quinone oxidoreductase subunit B, found in Campylobacter jejuni subsp. jejuni serotype O:2 (strain ATCC 700819 / NCTC 11168).